We begin with the raw amino-acid sequence, 173 residues long: MSVILGIDPGSRVTGYGVIRQQGRHLIYLGSGCIRTSDLELPLRLKQIYAGVSEIITQFQPDAFAIEQVFMAKNADSALKLGQARGSAIVAAVNAELPVYEYAARLIKQAVVGTGAADKSQVQHMVQQMLKLPGKPQADAADALGVAICHANTNKTLIALAGQATSARRGRYR.

Residues D8, E67, and D139 contribute to the active site. Mg(2+) contacts are provided by D8, E67, and D139.

Belongs to the RuvC family. In terms of assembly, homodimer which binds Holliday junction (HJ) DNA. The HJ becomes 2-fold symmetrical on binding to RuvC with unstacked arms; it has a different conformation from HJ DNA in complex with RuvA. In the full resolvosome a probable DNA-RuvA(4)-RuvB(12)-RuvC(2) complex forms which resolves the HJ. Mg(2+) is required as a cofactor.

The protein localises to the cytoplasm. It carries out the reaction Endonucleolytic cleavage at a junction such as a reciprocal single-stranded crossover between two homologous DNA duplexes (Holliday junction).. In terms of biological role, the RuvA-RuvB-RuvC complex processes Holliday junction (HJ) DNA during genetic recombination and DNA repair. Endonuclease that resolves HJ intermediates. Cleaves cruciform DNA by making single-stranded nicks across the HJ at symmetrical positions within the homologous arms, yielding a 5'-phosphate and a 3'-hydroxyl group; requires a central core of homology in the junction. The consensus cleavage sequence is 5'-(A/T)TT(C/G)-3'. Cleavage occurs on the 3'-side of the TT dinucleotide at the point of strand exchange. HJ branch migration catalyzed by RuvA-RuvB allows RuvC to scan DNA until it finds its consensus sequence, where it cleaves and resolves the cruciform DNA. The polypeptide is Crossover junction endodeoxyribonuclease RuvC (Vibrio cholerae serotype O1 (strain ATCC 39541 / Classical Ogawa 395 / O395)).